A 370-amino-acid polypeptide reads, in one-letter code: D-aspartate oxidase (370 aa).

FAD is bound by residues I15, A49, S50, G54, V166, R317, G346, and Q348. Positions 368–370 (ARL) match the Microbody targeting signal motif.

Belongs to the DAMOX/DASOX family. As to quaternary structure, homotetramer. FAD serves as cofactor.

Its subcellular location is the peroxisome matrix. It carries out the reaction D-aspartate + O2 + H2O = oxaloacetate + H2O2 + NH4(+). It catalyses the reaction D-glutamate + O2 + H2O = H2O2 + 2-oxoglutarate + NH4(+). Its activity is regulated as follows. Inhibited by malonate and D-malate. Very mildly inhibited by benzoate, ethylenediaminetetraacetic acid (EDTA), crotonate and anthranilate. May be very mildly inhibited by meso-tartrate. In terms of biological role, selectively catalyzes the oxidative deamination of acidic amino acids. Protects the organism from the toxicity of D-amino acids. Enables the organism to utilize D-amino acids as a source of nutrients. Enables the organism to utilize D-aspartate as a source of nitrogen and carbon. This Vanrija humicola (Yeast) protein is D-aspartate oxidase.